The chain runs to 78 residues: Large ribosomal subunit protein bL28 (78 aa).

The tract at residues 1–22 (MAKVCQVTGKRPVTGHNVSHAK) is disordered.

The protein belongs to the bacterial ribosomal protein bL28 family.

The protein is Large ribosomal subunit protein bL28 of Saccharophagus degradans (strain 2-40 / ATCC 43961 / DSM 17024).